A 229-amino-acid polypeptide reads, in one-letter code: ATP synthase subunit a (229 aa).

A run of 7 helical transmembrane segments spans residues 24–44 (RLCF…LLFC), 45–65 (LFDL…FMLF), 83–103 (LLFC…CFLC), 117–137 (FMDV…SLLC), 143–163 (FLRL…FFDF), 177–199 (CYFI…LYLL), and 206–228 (LQLF…FLLF).

The protein belongs to the ATPase A chain family. As to quaternary structure, F-type ATPases have 2 components, CF(1) - the catalytic core - and CF(0) - the membrane proton channel. CF(1) has five subunits: alpha(3), beta(3), gamma(1), delta(1), epsilon(1). CF(0) has three main subunits: a, b and c.

It localises to the mitochondrion inner membrane. In terms of biological role, mitochondrial membrane ATP synthase (F(1)F(0) ATP synthase or Complex V) produces ATP from ADP in the presence of a proton gradient across the membrane which is generated by electron transport complexes of the respiratory chain. F-type ATPases consist of two structural domains, F(1) - containing the extramembraneous catalytic core and F(0) - containing the membrane proton channel, linked together by a central stalk and a peripheral stalk. During catalysis, ATP synthesis in the catalytic domain of F(1) is coupled via a rotary mechanism of the central stalk subunits to proton translocation. Key component of the proton channel; it may play a direct role in the translocation of protons across the membrane. This is ATP synthase subunit a (ATP6) from Trypanosoma brucei brucei.